Here is a 542-residue protein sequence, read N- to C-terminus: Excitatory amino acid transporter 1 (542 aa).

The Cytoplasmic portion of the chain corresponds to 1 to 47 (MTKSNGEEARLGGRMERFQQGVRKRTLLAKKKVQNITKEDVKSYLFR). Residues 48–68 (NAFVLLTVTAVIVGTILGFTL) form a helical membrane-spanning segment. Topologically, residues 69–86 (RPYRMSYREVKYFSFPGE) are extracellular. Residues 87-108 (LLMRMLQMLVLPLIISSLVTGM) traverse the membrane as a helical segment. Residues 109 to 122 (AALDSKASGKMGMR) are Cytoplasmic-facing. A helical transmembrane segment spans residues 123 to 145 (AVVYYMTTTIIAVVIGIIIVIII). Residues 146-236 (HPGKGTKENM…ITEELVPVPG (91 aa)) lie on the Extracellular side of the membrane. Residues 237-260 (SVNGVNALGLVVFSMCFGFVIGNM) traverse the membrane as a helical segment. Over 261–269 (KEQGQALRE) the chain is Cytoplasmic. The chain crosses the membrane as a helical span at residues 270–297 (FFDSLNEAIMRLVAVIMWYAPLGILFLI). Over 298 to 318 (AGKIVEMEDMGVIGGQLAMYT) the chain is Extracellular. A helical membrane pass occupies residues 319-340 (VTVIVGLLIHAVIVLPLLYFLV). At 341 to 345 (TRKNP) the chain is on the cytoplasmic side. Residues 346–376 (WVFIGGLLQALITALGTSSSSATLPITFKCL) constitute an intramembrane region (discontinuously helical). Position 363-365 (363-365 (SSS)) interacts with L-aspartate. Residues 377–385 (EENNGVDKR) are Cytoplasmic-facing. Residues 386–412 (VTRFVLPVGATINMDGTALYEALAAIF) traverse the membrane as a helical segment. Positions 394, 396, and 398 each coordinate Na(+). L-aspartate is bound at residue Thr-402. The Extracellular segment spans residues 413-425 (IAQVNNFELNFGQ). The discontinuously helical intramembrane region spans 426 to 459 (IITISITATAASIGAAGIPQAGLVTMVIVLTSVG). 443-447 (IPQAG) lines the L-aspartate pocket. The Extracellular segment spans residues 460–472 (LPTDDITLIIAVD). Residues 473-494 (WFLDRLRTTTNVLGDSLGAGIV) form a helical membrane-spanning segment. Positions 476 and 483 each coordinate L-aspartate. The Na(+) site is built by Asn-483 and Asp-487. The Cytoplasmic segment spans residues 495-542 (EHLSRHELKNRDVEMGNSVIEENEMKKPYQLISQESEIEKSMDSETKM). Position 512 is a phosphoserine (Ser-512).

This sequence belongs to the dicarboxylate/amino acid:cation symporter (DAACS) (TC 2.A.23) family. SLC1A3 subfamily. As to quaternary structure, homotrimer. Glycosylated.

The protein resides in the cell membrane. It carries out the reaction K(+)(in) + L-glutamate(out) + 3 Na(+)(out) + H(+)(out) = K(+)(out) + L-glutamate(in) + 3 Na(+)(in) + H(+)(in). The catalysed reaction is K(+)(in) + L-aspartate(out) + 3 Na(+)(out) + H(+)(out) = K(+)(out) + L-aspartate(in) + 3 Na(+)(in) + H(+)(in). The enzyme catalyses D-aspartate(out) + K(+)(in) + 3 Na(+)(out) + H(+)(out) = D-aspartate(in) + K(+)(out) + 3 Na(+)(in) + H(+)(in). Sodium-dependent, high-affinity amino acid transporter that mediates the uptake of L-glutamate and also L-aspartate and D-aspartate. Functions as a symporter that transports one amino acid molecule together with two or three Na(+) ions and one proton, in parallel with the counter-transport of one K(+) ion. Plays a redundant role in the rapid removal of released glutamate from the synaptic cleft, which is essential for terminating the postsynaptic action of glutamate. The sequence is that of Excitatory amino acid transporter 1 (SLC1A3) from Bos taurus (Bovine).